A 188-amino-acid polypeptide reads, in one-letter code: DPITAALSQRAMVLGKSGELKTWGLVLGALKAAREEQVTSEQAKFWLGLGGGRVSPPGPECIEKPATERRIDKGEEVGETTVQRDAKMAPEETATPKTVGTSCYHCGTAIGCNCATASAPPPPYVGSGLYPSLAGVGEQQGQGGDTPRGAEQPRAEPGHAGLAPGPALTDWARIREELASTGPPVVAM.

The segment covering 77–90 has biased composition (basic and acidic residues); the sequence is VGETTVQRDAKMAP. The interval 77-99 is disordered; that stretch reads VGETTVQRDAKMAPEETATPKTV. Residues 121 to 124 carry the PPXY motif motif; the sequence is PPPY. A disordered region spans residues 130 to 166; that stretch reads YPSLAGVGEQQGQGGDTPRGAEQPRAEPGHAGLAPGP.

Post-translationally, specific enzymatic cleavages in vivo yield mature proteins.

It is found in the virion. The polypeptide is Gag polyprotein (ev-2) (Galliformes (EV-2)).